The primary structure comprises 156 residues: Ribosomal RNA large subunit methyltransferase H (156 aa).

S-adenosyl-L-methionine is bound by residues leucine 73, glycine 104, and 123 to 128; that span reads LSALTL.

This sequence belongs to the RNA methyltransferase RlmH family. In terms of assembly, homodimer.

It is found in the cytoplasm. The catalysed reaction is pseudouridine(1915) in 23S rRNA + S-adenosyl-L-methionine = N(3)-methylpseudouridine(1915) in 23S rRNA + S-adenosyl-L-homocysteine + H(+). Functionally, specifically methylates the pseudouridine at position 1915 (m3Psi1915) in 23S rRNA. The protein is Ribosomal RNA large subunit methyltransferase H of Vibrio parahaemolyticus serotype O3:K6 (strain RIMD 2210633).